Consider the following 92-residue polypeptide: Putative septation protein SpoVG (92 aa).

This sequence belongs to the SpoVG family.

In terms of biological role, could be involved in septation. The polypeptide is Putative septation protein SpoVG (Clostridioides difficile (strain 630) (Peptoclostridium difficile)).